The sequence spans 72 residues: MKLTCVVIVVVLFLTACQLITADDSRRTQKHRALRSTTKLSLSTRCRIPNQKCFQHLDDCCSRKCNRFNKCV.

The N-terminal stretch at 1 to 22 is a signal peptide; that stretch reads MKLTCVVIVVVLFLTACQLITA. The propeptide occupies 23–45; sequence DDSRRTQKHRALRSTTKLSLSTR. Intrachain disulfides connect Cys46/Cys61, Cys53/Cys65, and Cys60/Cys71. At Pro49 the chain carries 4-hydroxyproline.

It belongs to the conotoxin O1 superfamily. Post-translationally, this toxin is not amidated at the C-terminal Val residue. In terms of tissue distribution, expressed by the venom duct.

The protein resides in the secreted. Kappa-conotoxins bind and inhibit voltage-gated potassium channels (Kv). This toxin inhibits the drosophila Shaker channel (IC(50)=57-80 nM). In vivo, when tested in fish, this toxin induces hyperactivity, followed by continuous contraction and extension of major fins, without immobilization or death. Injection of this peptide together with the delta-conotoxin PVIA causes the sudden tetanus of prey (STOP) syndrome, which is a single, lethal 'fin-pop' in envenomed fish. When tested in mice, induces hyperactivity. This chain is Kappa-conotoxin PVIIA, found in Conus purpurascens (Purple cone).